We begin with the raw amino-acid sequence, 700 residues long: Elongation factor G (700 aa).

Positions 8-290 (ERYRNIGISA…AVVEYLPAPT (283 aa)) constitute a tr-type G domain. GTP is bound by residues 17-24 (AHIDAGKT), 88-92 (DTPGH), and 142-145 (NKMD).

The protein belongs to the TRAFAC class translation factor GTPase superfamily. Classic translation factor GTPase family. EF-G/EF-2 subfamily.

The protein resides in the cytoplasm. Its function is as follows. Catalyzes the GTP-dependent ribosomal translocation step during translation elongation. During this step, the ribosome changes from the pre-translocational (PRE) to the post-translocational (POST) state as the newly formed A-site-bound peptidyl-tRNA and P-site-bound deacylated tRNA move to the P and E sites, respectively. Catalyzes the coordinated movement of the two tRNA molecules, the mRNA and conformational changes in the ribosome. This is Elongation factor G from Haemophilus influenzae (strain 86-028NP).